Here is a 217-residue protein sequence, read N- to C-terminus: Oxygen-insensitive NAD(P)H nitroreductase (217 aa).

10–14 (RHSTK) is an FMN binding site. Positions 14, 41, 67, 71, 74, and 107 each coordinate NAD(+). Residue asparagine 71 participates in FMN binding. Residues 165 to 166 (EG) and 205 to 207 (KSR) contribute to the FMN site.

The protein belongs to the nitroreductase family. Homodimer. The cofactor is FMN.

In terms of biological role, reduction of a variety of nitroaromatic compounds using NADH (and to lesser extent NADPH) as source of reducing equivalents; two electrons are transferred. The sequence is that of Oxygen-insensitive NAD(P)H nitroreductase from Enterobacter cloacae.